A 359-amino-acid polypeptide reads, in one-letter code: Serpentine receptor class epsilon-13 (359 aa).

7 helical membrane-spanning segments follow: residues 33 to 53 (YLFV…YYLL), 74 to 94 (AIYL…ILLI), 111 to 131 (ISLF…AFVA), 150 to 170 (WLVG…ALDF), 180 to 200 (VTIF…NFLL), 237 to 257 (LALS…IDNL), and 266 to 286 (LNTV…PFVI).

This sequence belongs to the nematode receptor-like protein sre family.

It localises to the membrane. The chain is Serpentine receptor class epsilon-13 (sre-13) from Caenorhabditis elegans.